Reading from the N-terminus, the 188-residue chain is NADH-quinone oxidoreductase subunit I 2 (188 aa).

2 consecutive 4Fe-4S ferredoxin-type domains span residues 56–88 (HFLK…VVPY) and 98–127 (AKFE…LGQQ). Residues cysteine 68, cysteine 71, cysteine 74, cysteine 78, cysteine 107, cysteine 110, cysteine 113, and cysteine 117 each contribute to the [4Fe-4S] cluster site.

Belongs to the complex I 23 kDa subunit family. In terms of assembly, NDH-1 is composed of 14 different subunits. Subunits NuoA, H, J, K, L, M, N constitute the membrane sector of the complex. The cofactor is [4Fe-4S] cluster.

It localises to the cell inner membrane. It catalyses the reaction a quinone + NADH + 5 H(+)(in) = a quinol + NAD(+) + 4 H(+)(out). Its function is as follows. NDH-1 shuttles electrons from NADH, via FMN and iron-sulfur (Fe-S) centers, to quinones in the respiratory chain. The immediate electron acceptor for the enzyme in this species is believed to be ubiquinone. Couples the redox reaction to proton translocation (for every two electrons transferred, four hydrogen ions are translocated across the cytoplasmic membrane), and thus conserves the redox energy in a proton gradient. In Rhizobium meliloti (strain 1021) (Ensifer meliloti), this protein is NADH-quinone oxidoreductase subunit I 2.